A 207-amino-acid chain; its full sequence is Small ribosomal subunit protein uS4 (207 aa).

Positions 31-55 (KCKLDSKPGQHGRTSGARTSDYGTQ) are disordered. Polar residues predominate over residues 42–53 (GRTSGARTSDYG). In terms of domain architecture, S4 RNA-binding spans 97–160 (SRLDNVVYRM…KKQARIVEAL (64 aa)).

This sequence belongs to the universal ribosomal protein uS4 family. Part of the 30S ribosomal subunit. Contacts protein S5. The interaction surface between S4 and S5 is involved in control of translational fidelity.

Its function is as follows. One of the primary rRNA binding proteins, it binds directly to 16S rRNA where it nucleates assembly of the body of the 30S subunit. With S5 and S12 plays an important role in translational accuracy. This chain is Small ribosomal subunit protein uS4, found in Burkholderia orbicola (strain MC0-3).